The primary structure comprises 179 residues: Adenine phosphoribosyltransferase (179 aa).

This sequence belongs to the purine/pyrimidine phosphoribosyltransferase family. In terms of assembly, homodimer.

Its subcellular location is the cytoplasm. The catalysed reaction is AMP + diphosphate = 5-phospho-alpha-D-ribose 1-diphosphate + adenine. The protein operates within purine metabolism; AMP biosynthesis via salvage pathway; AMP from adenine: step 1/1. Catalyzes a salvage reaction resulting in the formation of AMP, that is energically less costly than de novo synthesis. The polypeptide is Adenine phosphoribosyltransferase (Helicobacter pylori (strain G27)).